The sequence spans 237 residues: Uridylate kinase (237 aa).

Lys12–Gly15 provides a ligand contact to ATP. An involved in allosteric activation by GTP region spans residues Gly20–Gly25. Gly54 serves as a coordination point for UMP. ATP is bound by residues Gly55 and Arg59. UMP is bound by residues Asp72 and Thr133 to Thr140. ATP contacts are provided by Tyr166 and Asp169.

The protein belongs to the UMP kinase family. As to quaternary structure, homohexamer.

The protein localises to the cytoplasm. The catalysed reaction is UMP + ATP = UDP + ADP. It participates in pyrimidine metabolism; CTP biosynthesis via de novo pathway; UDP from UMP (UMPK route): step 1/1. With respect to regulation, allosterically activated by GTP. Inhibited by UTP. In terms of biological role, catalyzes the reversible phosphorylation of UMP to UDP. The protein is Uridylate kinase of Clostridium perfringens (strain ATCC 13124 / DSM 756 / JCM 1290 / NCIMB 6125 / NCTC 8237 / Type A).